A 243-amino-acid chain; its full sequence is 35 kDa gas vesicle protein (243 aa).

The protein belongs to the gas vesicle GvpC family.

It localises to the gas vesicle shell. May confer stability to the gas vesicle shells. Gas vesicles are small, hollow, gas filled protein structures that are found in several microbial planktonic microorganisms. They allow the positioning of the organism at the favorable depth for growth. The protein is 35 kDa gas vesicle protein of Dactylococcopsis salina (strain PCC 8305) (Myxobactron salinum).